We begin with the raw amino-acid sequence, 185 residues long: Translation initiation factor IF-3 (185 aa).

This sequence belongs to the IF-3 family. Monomer.

The protein resides in the cytoplasm. IF-3 binds to the 30S ribosomal subunit and shifts the equilibrium between 70S ribosomes and their 50S and 30S subunits in favor of the free subunits, thus enhancing the availability of 30S subunits on which protein synthesis initiation begins. This chain is Translation initiation factor IF-3, found in Streptococcus pneumoniae serotype 19F (strain G54).